A 520-amino-acid chain; its full sequence is Cell division control protein 3 (520 aa).

Over residues 1 to 24 the composition is skewed to basic and acidic residues; the sequence is MSLKEEQVSIKQDPEQEERQHDQF. A disordered region spans residues 1-83; sequence MSLKEEQVSI…SSQSEKGQVL (83 aa). Position 2 is an N-acetylserine (S2). Residue S2 is modified to Phosphoserine. K4 participates in a covalent cross-link: Glycyl lysine isopeptide (Lys-Gly) (interchain with G-Cter in SUMO). S9 carries the phosphoserine modification. Glycyl lysine isopeptide (Lys-Gly) (interchain with G-Cter in SUMO) cross-links involve residues K11 and K30. The residue at position 47 (T47) is a Phosphothreonine. Positions 51-64 are enriched in basic and acidic residues; the sequence is DSERFEAAESDVKV. S60 bears the Phosphoserine mark. A Glycyl lysine isopeptide (Lys-Gly) (interchain with G-Cter in SUMO) cross-link involves residue K63. S77 is modified (phosphoserine). Residues 116 to 411 form the Septin-type G domain; that stretch reads NGFSFNLLCV…ENYRSSKLAK (296 aa). Residues 126–133 form a G1 motif region; sequence GPDGIGKT. 126-133 provides a ligand contact to GTP; sequence GPDGIGKT. The span at 156–167 shows a compositional bias: acidic residues; sequence ELANDQEEEEGQ. Residues 156-181 are disordered; the sequence is ELANDQEEEEGQGEGHENQSQEQRHK. Positions 168–179 are enriched in basic and acidic residues; the sequence is GEGHENQSQEQR. A Phosphoserine modification is found at S175. Positions 204–207 are G3 motif; that stretch reads DTEG. Residues G207, 287–295, G344, and R360 contribute to the GTP site; that span reads KSDILTDEE. Residues 286–289 form a G4 motif region; the sequence is AKSD. K287 is covalently cross-linked (Glycyl lysine isopeptide (Lys-Gly) (interchain with G-Cter in SUMO)). A coiled-coil region spans residues 427-508; the sequence is ISKQQEEKTL…INSASPNVNH (82 aa). The residue at position 468 (T468) is a Phosphothreonine. A disordered region spans residues 496–520; sequence ELSINSASPNVNHSPVPTKKKGFLR. The span at 497–510 shows a compositional bias: polar residues; sequence LSINSASPNVNHSP. S509 is subject to Phosphoserine.

Belongs to the TRAFAC class TrmE-Era-EngA-EngB-Septin-like GTPase superfamily. Septin GTPase family. Component of the septin complex which consists of CDC3, CDC10, CDC11, CDC12 and probably SHS1 and rearranges to a cortical collar of highly ordered filaments at the mother-bud-neck. A complex formed by CDC3, CDC10, CDC11 and CDC12 is capable of forming long filaments in vitro and the components seem to be present in a 2:2:2:2 arrangement in vivo. The filaments are proposed to be formed by the end-to-end polymerization of CDC3-CDC12-CDC11 complexes with CDC10 serving as a bridge to bundle the polymers into paired filaments. Component of the GIN4 complex composed of at least BNI5, CDC3, CDC10, CDC11, CDC12, GIN4, NAP1 and SHS1. Self-associates. Interacts with SIZ1 and SYP1. Phosphorylated by CDC28. Phosphorylation at the end of G1 may facilitate initiation of a new cell cycle by promoting disassembly of the obsolete septin ring from the previous cell cycle. In terms of processing, sumoylated during mitosis on the mother cell side of the bud neck by UBC9/SIZ1. Sumoylation probably plays a central role in regulating septin ring disassembly during the cell cycle.

Its subcellular location is the membrane. The protein resides in the bud neck. Septins are GTPases involved in cytokinesis that assemble early in the cell cycle as a patch at the incipient bud site and form a ring approximate 15 minutes before bud emergence, which transforms into an hour-glass shaped collar of cortical filaments that spans both sides of the mother-bud neck. This collar persists until just before cytokinesis, when it splits into two rings that occupy opposite sides of the neck. The septins at the bud neck serve as a structural scaffold that recruits different components involved in diverse processes at specific stages during the cell cycle. Many proteins bind asymmetrically to the septin collar. The septin assembly is regulated by protein kinases GIN4 and/or CLA4. May act by recruiting MYO1 and HOF1, a protein involved in septation, to the site of cleavage. Septins are also involved in cell morphogenesis, bud site selection, chitin deposition, cell cycle regulation, cell compartmentalization and spore wall formation. The sequence is that of Cell division control protein 3 (CDC3) from Saccharomyces cerevisiae (strain ATCC 204508 / S288c) (Baker's yeast).